The primary structure comprises 137 residues: Acidic phospholipase A2 1 (137 aa).

The N-terminal stretch at 1–11 (LVAVCVSLLGA) is a signal peptide. A propeptide spanning residues 12 to 19 (ANIPPQPL) is cleaved from the precursor. 7 cysteine pairs are disulfide-bonded: Cys-30/Cys-89, Cys-44/Cys-136, Cys-46/Cys-62, Cys-61/Cys-117, Cys-68/Cys-110, Cys-78/Cys-103, and Cys-96/Cys-108. Ca(2+) contacts are provided by Tyr-45, Gly-47, and Gly-49. 2 residues coordinate tridecanoate: Gly-49 and His-65. Residue His-65 is part of the active site. Asp-66 serves as a coordination point for Ca(2+). Asp-111 is an active-site residue.

In terms of assembly, monomer. The cofactor is Ca(2+). In terms of tissue distribution, expressed by the venom gland.

It localises to the secreted. It carries out the reaction a 1,2-diacyl-sn-glycero-3-phosphocholine + H2O = a 1-acyl-sn-glycero-3-phosphocholine + a fatty acid + H(+). Its function is as follows. Snake venom phospholipase A2 (PLA2) that shows anticoagulant and neurotoxic activities. PLA2 catalyzes the calcium-dependent hydrolysis of the 2-acyl groups in 3-sn-phosphoglycerides. This is Acidic phospholipase A2 1 from Bungarus caeruleus (Indian krait).